We begin with the raw amino-acid sequence, 243 residues long: Transmembrane protein 176A (243 aa).

Phosphoserine is present on Ser42. 4 helical membrane passes run 65 to 85 (WVVQ…LYIC), 92 to 112 (TQGA…VAFL), 122 to 142 (ALMR…AIVI), and 204 to 224 (LLGV…VYLW).

The protein belongs to the TMEM176 family. In terms of assembly, interacts with MCOLN2.

It is found in the membrane. In Rattus norvegicus (Rat), this protein is Transmembrane protein 176A (Tmem176a).